The primary structure comprises 147 residues: Transthyretin (147 aa).

The signal sequence occupies residues 1-20 (MASHRLLLLCLAGLVFVSEA). Sulfocysteine is present on cysteine 30. An L-thyroxine-binding site is contributed by lysine 35. The residue at position 72 (serine 72) is a Phosphoserine. Residue glutamate 74 coordinates L-thyroxine. The N-linked (GlcNAc...) asparagine glycan is linked to asparagine 118. Serine 137 lines the L-thyroxine pocket.

The protein belongs to the transthyretin family. In terms of assembly, homotetramer. Dimer of dimers. In the homotetramer, subunits assemble around a central channel that can accommodate two ligand molecules. Interacts with RBP4. Post-translationally, sulfonation of the reactive cysteine Cys-30 enhances the stability of the native conformation of TTR, avoiding misassembly of the protein leading to amyloid formation.

Its subcellular location is the secreted. Functionally, thyroid hormone-binding protein. Probably transports thyroxine from the bloodstream to the brain. This is Transthyretin (TTR) from Macaca fascicularis (Crab-eating macaque).